A 185-amino-acid polypeptide reads, in one-letter code: Ribosome-recycling factor (185 aa).

Belongs to the RRF family.

It localises to the cytoplasm. In terms of biological role, responsible for the release of ribosomes from messenger RNA at the termination of protein biosynthesis. May increase the efficiency of translation by recycling ribosomes from one round of translation to another. The chain is Ribosome-recycling factor from Enterococcus faecalis (strain ATCC 700802 / V583).